A 349-amino-acid chain; its full sequence is Aquaporin-4 (349 aa).

2 consecutive transmembrane segments (helical) span residues 92–112 (LSES…AATA) and 125–147 (AFYH…GGLL). Positions 148 to 150 (NPA) match the NPA 1 motif. Residues 167–187 (LIYMSAQYFGAFIASAVVYLI) form a helical membrane-spanning segment. Asn194 and Asn207 each carry an N-linked (GlcNAc...) asparagine glycan. Helical transmembrane passes span 225–245 (GAIF…LSIC) and 256–276 (MFPF…SYSA). The NPA 2 motif lies at 281-283 (NPA). Residues 314–334 (WLFPYVGALLGGVIYEIFIGI) traverse the membrane as a helical segment.

The protein belongs to the MIP/aquaporin (TC 1.A.8) family.

The protein localises to the cell membrane. In terms of biological role, aquaglyceroporin that may modulate the water content and osmolytes during anhydrobiosis. The sequence is that of Aquaporin-4 from Milnesium tardigradum (Water bear).